The sequence spans 205 residues: GTP cyclohydrolase-2 (205 aa).

GTP is bound at residue 49–53 (RIHSE). Positions 54, 65, and 67 each coordinate Zn(2+). Residues Gln70, 92–94 (EGR), and Thr114 each bind GTP. Asp126 functions as the Proton acceptor in the catalytic mechanism. Arg128 (nucleophile) is an active-site residue. GTP-binding residues include Thr149 and Lys154.

The protein belongs to the GTP cyclohydrolase II family. The cofactor is Zn(2+).

It catalyses the reaction GTP + 4 H2O = 2,5-diamino-6-hydroxy-4-(5-phosphoribosylamino)-pyrimidine + formate + 2 phosphate + 3 H(+). It participates in cofactor biosynthesis; riboflavin biosynthesis; 5-amino-6-(D-ribitylamino)uracil from GTP: step 1/4. Its function is as follows. Catalyzes the conversion of GTP to 2,5-diamino-6-ribosylamino-4(3H)-pyrimidinone 5'-phosphate (DARP), formate and pyrophosphate. This chain is GTP cyclohydrolase-2, found in Shewanella sediminis (strain HAW-EB3).